A 211-amino-acid polypeptide reads, in one-letter code: Sec-independent protein translocase protein TatB (211 aa).

Residues 1 to 21 form a helical membrane-spanning segment; the sequence is MFDIGVGELTLIAVVALVVLG. The interval 175 to 211 is disordered; that stretch reads AHLTSAPAPPVTVAPVDAGTSASPTPSEPTKIQEKQP. Positions 194–204 are enriched in polar residues; the sequence is TSASPTPSEPT.

This sequence belongs to the TatB family. In terms of assembly, the Tat system comprises two distinct complexes: a TatABC complex, containing multiple copies of TatA, TatB and TatC subunits, and a separate TatA complex, containing only TatA subunits. Substrates initially bind to the TatABC complex, which probably triggers association of the separate TatA complex to form the active translocon.

It localises to the cell inner membrane. Part of the twin-arginine translocation (Tat) system that transports large folded proteins containing a characteristic twin-arginine motif in their signal peptide across membranes. Together with TatC, TatB is part of a receptor directly interacting with Tat signal peptides. TatB may form an oligomeric binding site that transiently accommodates folded Tat precursor proteins before their translocation. This Xanthomonas oryzae pv. oryzae (strain MAFF 311018) protein is Sec-independent protein translocase protein TatB.